A 777-amino-acid chain; its full sequence is Santalene and bergamotene synthase, chloroplastic (777 aa).

The N-terminal 36 residues, 1-36 (MIVGYRSTIITLSHPKLGNGKTISSNAIFQRSCRVR), are a transit peptide targeting the chloroplast. Residues aspartate 530 and aspartate 534 each contribute to the Mg(2+) site. The DDXXD motif signature appears at 530-534 (DDQFD).

The protein belongs to the terpene synthase family. Tpse subfamily. Mg(2+) serves as cofactor. Mn(2+) is required as a cofactor.

It is found in the plastid. The protein resides in the chloroplast. It carries out the reaction (2Z,6Z)-farnesyl diphosphate = (+)-alpha-santalene + diphosphate. The catalysed reaction is (2Z,6Z)-farnesyl diphosphate = (+)-endo-beta-bergamotene + diphosphate. The enzyme catalyses (2Z,6Z)-farnesyl diphosphate = (1S,5S,6S)-alpha-bergamotene + diphosphate. In terms of biological role, (2Z,6Z)-farnesyl diphosphate cyclizing enzyme. Produces (+)-alpha-santalene, (+)-endo-beta-bergamotene, (-)-endo-alpha-bergamotene, and at lower amounts, (-)exo-alpha-bergamotene and (+)-epi-beta-santalene. Not able to use geranyl diphosphate, E,E-farnesyl diphosphate or E,E,E-geranylgeranyl diphosphate as substrates, but able to use Neryl diphosphate to make the monoterpene terpineol. The polypeptide is Santalene and bergamotene synthase, chloroplastic (SBS) (Solanum habrochaites (Wild tomato)).